A 460-amino-acid polypeptide reads, in one-letter code: Ribulose bisphosphate carboxylase large chain (460 aa).

Residue lysine 4 is modified to N6,N6,N6-trimethyllysine. Substrate-binding residues include asparagine 113 and threonine 163. The active-site Proton acceptor is lysine 165. Substrate is bound at residue lysine 167. Residues lysine 191, aspartate 193, and glutamate 194 each coordinate Mg(2+). Lysine 191 carries the post-translational modification N6-carboxylysine. Histidine 284 functions as the Proton acceptor in the catalytic mechanism. Positions 285, 317, and 369 each coordinate substrate.

The protein belongs to the RuBisCO large chain family. Type I subfamily. As to quaternary structure, heterohexadecamer of 8 large chains and 8 small chains. The cofactor is Mg(2+).

The protein localises to the plastid. It localises to the chloroplast. The enzyme catalyses 2 (2R)-3-phosphoglycerate + 2 H(+) = D-ribulose 1,5-bisphosphate + CO2 + H2O. It catalyses the reaction D-ribulose 1,5-bisphosphate + O2 = 2-phosphoglycolate + (2R)-3-phosphoglycerate + 2 H(+). In terms of biological role, ruBisCO catalyzes two reactions: the carboxylation of D-ribulose 1,5-bisphosphate, the primary event in carbon dioxide fixation, as well as the oxidative fragmentation of the pentose substrate in the photorespiration process. Both reactions occur simultaneously and in competition at the same active site. This is Ribulose bisphosphate carboxylase large chain from Cunninghamia lanceolata (China fir).